The primary structure comprises 107 residues: Flagellar hook-basal body complex protein FliE (107 aa).

Belongs to the FliE family.

It is found in the bacterial flagellum basal body. The protein is Flagellar hook-basal body complex protein FliE of Cupriavidus pinatubonensis (strain JMP 134 / LMG 1197) (Cupriavidus necator (strain JMP 134)).